Reading from the N-terminus, the 277-residue chain is MIOREX complex component 2 (277 aa).

This sequence belongs to the NAD(P)-dependent epimerase/dehydratase family. Associates with the mitochondrial ribosome. Component of a multi-subunit COQ enzyme complex.

It is found in the mitochondrion. The protein operates within cofactor biosynthesis; ubiquinone biosynthesis. Component of MIOREX complexes, large expressome-like assemblies of ribosomes with factors involved in all the steps of post-transcriptional gene expression. Component of a multi-subunit COQ enzyme complex required for coenzyme Q biosynthesis. The protein is MIOREX complex component 2 of Saccharomyces cerevisiae (strain ATCC 204508 / S288c) (Baker's yeast).